Consider the following 371-residue polypeptide: MEEAGAAVVTAGEAELNWSRLSVSTETLESELEARGEERRGAREALLRLLLPHNRLVSLPRALGSGFPHLQLLDVSGNALTALGPELLALRGLRTLLAKNNRLGGPSALPKGLAQSPLCRSLQVLNLSGNCFQEVPASLLELRALQTLSLGGNQLQSIPAEIENLQSLECLYLGGNFIKEIPPELGNLPSLNYLVLCDNKIQSIPPQLSQLHSLRSLSLHNNLLTYLPREILNLIHLEELSLRGNPLVVRFVRDLTYDPPTLLELAARTIKIRNISYTPYDLPGNLLRYLGSASNCPNPKCGGVYFDCCVRQIKFVDFCGKYRLPLMHYLCSPECSSPCSSASHSSTSQSESDSEDEASVAARRMQKVLLG.

Position 24 is a phosphoserine (Ser24). LRR repeat units lie at residues 45-66, 69-91, 92-113, 121-143, 144-166, 167-189, 190-211, 213-234, and 236-256; these read ALLR…LGSG, HLQL…LALR, GLRT…PKGL, SLQV…LELR, ALQT…ENLQ, SLEC…GNLP, SLNY…LSQL, SLRS…ILNL, and HLEE…RDLT. The span at 340-351 shows a compositional bias: low complexity; it reads SSASHSSTSQSE. Residues 340 to 361 form a disordered region; that stretch reads SSASHSSTSQSESDSEDEASVA.

This is Leucine-rich repeat-containing protein 58 (LRRC58) from Homo sapiens (Human).